The primary structure comprises 552 residues: Probable protein kinase UbiB (552 aa).

A Protein kinase domain is found at His121–Ala504. ATP is bound by residues Leu127–Val135 and Lys149. Asp284 serves as the catalytic Proton acceptor. 2 helical membrane passes run Val501–His521 and Ile530–Trp550.

It belongs to the ABC1 family. UbiB subfamily.

It is found in the cell inner membrane. It functions in the pathway cofactor biosynthesis; ubiquinone biosynthesis [regulation]. In terms of biological role, is probably a protein kinase regulator of UbiI activity which is involved in aerobic coenzyme Q (ubiquinone) biosynthesis. In Xylella fastidiosa (strain M23), this protein is Probable protein kinase UbiB.